A 67-amino-acid polypeptide reads, in one-letter code: Large ribosomal subunit protein bL35 (67 aa).

It belongs to the bacterial ribosomal protein bL35 family.

The protein is Large ribosomal subunit protein bL35 of Methylorubrum extorquens (strain CM4 / NCIMB 13688) (Methylobacterium extorquens).